The sequence spans 162 residues: Cytochrome c-type biogenesis protein CcmE (162 aa).

Topologically, residues M1–R7 are cytoplasmic. The chain crosses the membrane as a helical; Signal-anchor for type II membrane protein span at residues L8–A28. The Periplasmic portion of the chain corresponds to L29–Q162. H122 and Y126 together coordinate heme. The segment at Q138–Q162 is disordered.

It belongs to the CcmE/CycJ family.

Its subcellular location is the cell inner membrane. Its function is as follows. Heme chaperone required for the biogenesis of c-type cytochromes. Transiently binds heme delivered by CcmC and transfers the heme to apo-cytochromes in a process facilitated by CcmF and CcmH. The sequence is that of Cytochrome c-type biogenesis protein CcmE from Nitrobacter hamburgensis (strain DSM 10229 / NCIMB 13809 / X14).